A 509-amino-acid polypeptide reads, in one-letter code: ATP synthase subunit alpha (509 aa).

Residue 171–178 (GDRQTGKT) coordinates ATP.

This sequence belongs to the ATPase alpha/beta chains family. F-type ATPases have 2 components, CF(1) - the catalytic core - and CF(0) - the membrane proton channel. CF(1) has five subunits: alpha(3), beta(3), gamma(1), delta(1), epsilon(1). CF(0) has three main subunits: a(1), b(2) and c(9-12). The alpha and beta chains form an alternating ring which encloses part of the gamma chain. CF(1) is attached to CF(0) by a central stalk formed by the gamma and epsilon chains, while a peripheral stalk is formed by the delta and b chains.

Its subcellular location is the cell inner membrane. The enzyme catalyses ATP + H2O + 4 H(+)(in) = ADP + phosphate + 5 H(+)(out). Functionally, produces ATP from ADP in the presence of a proton gradient across the membrane. The alpha chain is a regulatory subunit. The sequence is that of ATP synthase subunit alpha from Neorickettsia sennetsu (strain ATCC VR-367 / Miyayama) (Ehrlichia sennetsu).